We begin with the raw amino-acid sequence, 392 residues long: Putative RNA-binding protein Luc7-like 2 (392 aa).

A Phosphoserine modification is found at Ser-18. Residues 102–177 (EVSKKRLAET…EAEEVYRNSM (76 aa)) are a coiled coil. The segment covering 235-257 (KQEKRNQERLKRREEREREEREK) has biased composition (basic and acidic residues). Residues 235-392 (KQEKRNQERL…SSEEREAGEI (158 aa)) form a disordered region. Basic residues predominate over residues 258 to 321 (LRRSRSHSKN…RSRSHQRSRH (64 aa)). Lys-266 and Lys-269 each carry 5-hydroxylysine; by JMJD6. 2 stretches are compositionally biased toward basic and acidic residues: residues 337–364 (KERF…DRDR) and 377–392 (RSED…AGEI).

This sequence belongs to the Luc7 family. In terms of assembly, interacts with SCNM1. As to expression, all isoforms are expressed in brain, kidney, heart, thymus, stomach, skeletal muscle, testis and spinal cord.

The protein resides in the nucleus speckle. Its subcellular location is the nucleus. The protein localises to the nucleoplasm. May bind to RNA via its Arg/Ser-rich domain. The polypeptide is Putative RNA-binding protein Luc7-like 2 (Luc7l2) (Mus musculus (Mouse)).